The following is a 278-amino-acid chain: 4-deoxy-L-threo-5-hexosulose-uronate ketol-isomerase (278 aa).

The Zn(2+) site is built by H196, H198, E203, and H245.

The protein belongs to the KduI family. As to quaternary structure, homohexamer. Requires Zn(2+) as cofactor.

It carries out the reaction 5-dehydro-4-deoxy-D-glucuronate = 3-deoxy-D-glycero-2,5-hexodiulosonate. It functions in the pathway glycan metabolism; pectin degradation; 2-dehydro-3-deoxy-D-gluconate from pectin: step 4/5. Its function is as follows. Catalyzes the isomerization of 5-dehydro-4-deoxy-D-glucuronate to 3-deoxy-D-glycero-2,5-hexodiulosonate. The chain is 4-deoxy-L-threo-5-hexosulose-uronate ketol-isomerase from Escherichia coli O8 (strain IAI1).